An 895-amino-acid polypeptide reads, in one-letter code: Protein translocase subunit SecA (895 aa).

Residues glutamine 86, 104–108, and aspartate 494 each bind ATP; that span reads GEGKT. 2 stretches are compositionally biased toward low complexity: residues 838–849 and 870–882; these read AAATPPGFGAPP and GDAA…TGNR. The disordered stretch occupies residues 838–895; sequence AAATPPGFGAPPVRQQLQYSAPTAEGDVEVHAGDAAATDADTGNRAQRRANQRQQREV.

Belongs to the SecA family. Monomer and homodimer. Part of the essential Sec protein translocation apparatus which comprises SecA, SecYEG and auxiliary proteins SecDF. Other proteins may also be involved.

It is found in the cell membrane. It localises to the cytoplasm. It carries out the reaction ATP + H2O + cellular proteinSide 1 = ADP + phosphate + cellular proteinSide 2.. Part of the Sec protein translocase complex. Interacts with the SecYEG preprotein conducting channel. Has a central role in coupling the hydrolysis of ATP to the transfer of proteins into and across the cell membrane, serving as an ATP-driven molecular motor driving the stepwise translocation of polypeptide chains across the membrane. This is Protein translocase subunit SecA from Kineococcus radiotolerans (strain ATCC BAA-149 / DSM 14245 / SRS30216).